Reading from the N-terminus, the 276-residue chain is Extracellular metalloprotease 1 (276 aa).

Residues 1 to 18 (MRVSVPVLALAFGSLAAA) form the signal peptide. Residue His-191 participates in Zn(2+) binding. Residue Glu-192 is part of the active site. His-195 is a Zn(2+) binding site. Residues 211–233 (GDYVSDTPPQRSPSSGCPVGRDS) are disordered. A disulfide bridge connects residues Cys-227 and Cys-253.

This sequence belongs to the peptidase M43B family.

It is found in the secreted. Functionally, secreted metalloproteinase that allows assimilation of proteinaceous substrates. Pays a pivotal role as a pathogenicity determinant during infections and contributes to the ability of the pathogen to persist within the mammalian host. Digests an immunodominant cell surface antigen (SOWgp) and prevents host recognition of endospores during the phase of development when these fungal cells are most vulnerable to phagocytic cell defenses. This is Extracellular metalloprotease 1 (MEP1) from Coccidioides posadasii (strain C735) (Valley fever fungus).